The chain runs to 343 residues: Ribosomal RNA small subunit methyltransferase C (343 aa).

It belongs to the methyltransferase superfamily. RsmC family. Monomer.

It is found in the cytoplasm. It carries out the reaction guanosine(1207) in 16S rRNA + S-adenosyl-L-methionine = N(2)-methylguanosine(1207) in 16S rRNA + S-adenosyl-L-homocysteine + H(+). Its function is as follows. Specifically methylates the guanine in position 1207 of 16S rRNA in the 30S particle. In Escherichia coli O17:K52:H18 (strain UMN026 / ExPEC), this protein is Ribosomal RNA small subunit methyltransferase C.